The chain runs to 208 residues: Small ribosomal subunit protein uS4 (208 aa).

One can recognise an S4 RNA-binding domain in the interval 98-159; it reads RRLDNVVYRL…KSRNVAAISE (62 aa).

Belongs to the universal ribosomal protein uS4 family. As to quaternary structure, part of the 30S ribosomal subunit. Contacts protein S5. The interaction surface between S4 and S5 is involved in control of translational fidelity.

Its function is as follows. One of the primary rRNA binding proteins, it binds directly to 16S rRNA where it nucleates assembly of the body of the 30S subunit. With S5 and S12 plays an important role in translational accuracy. This Trichlorobacter lovleyi (strain ATCC BAA-1151 / DSM 17278 / SZ) (Geobacter lovleyi) protein is Small ribosomal subunit protein uS4.